Reading from the N-terminus, the 102-residue chain is Small ribosomal subunit protein uS10 (102 aa).

The protein belongs to the universal ribosomal protein uS10 family. Part of the 30S ribosomal subunit.

Functionally, involved in the binding of tRNA to the ribosomes. This is Small ribosomal subunit protein uS10 from Gluconacetobacter diazotrophicus (strain ATCC 49037 / DSM 5601 / CCUG 37298 / CIP 103539 / LMG 7603 / PAl5).